A 402-amino-acid polypeptide reads, in one-letter code: Sulfate adenylyltransferase (402 aa).

Belongs to the sulfate adenylyltransferase family.

The enzyme catalyses sulfate + ATP + H(+) = adenosine 5'-phosphosulfate + diphosphate. Its pathway is sulfur metabolism; hydrogen sulfide biosynthesis; sulfite from sulfate: step 1/3. In Thiobacillus denitrificans (strain ATCC 25259 / T1), this protein is Sulfate adenylyltransferase.